The primary structure comprises 497 residues: Glycerol kinase (497 aa).

Residue T12 participates in ADP binding. Residues T12, T13, and S14 each contribute to the ATP site. Sn-glycerol 3-phosphate is bound at residue T12. Residue R16 coordinates ADP. Positions 82, 83, 134, and 243 each coordinate sn-glycerol 3-phosphate. The glycerol site is built by R82, E83, Y134, D243, and Q244. 2 residues coordinate ADP: T265 and G308. Residues T265, G308, Q312, and G411 each contribute to the ATP site. G411 is an ADP binding site.

It belongs to the FGGY kinase family.

The enzyme catalyses glycerol + ATP = sn-glycerol 3-phosphate + ADP + H(+). The protein operates within polyol metabolism; glycerol degradation via glycerol kinase pathway; sn-glycerol 3-phosphate from glycerol: step 1/1. Inhibited by fructose 1,6-bisphosphate (FBP). Functionally, key enzyme in the regulation of glycerol uptake and metabolism. Catalyzes the phosphorylation of glycerol to yield sn-glycerol 3-phosphate. The polypeptide is Glycerol kinase (Sinorhizobium fredii (strain NBRC 101917 / NGR234)).